Reading from the N-terminus, the 394-residue chain is Phosphopentomutase (394 aa).

Residues Asp-15, Asp-288, His-293, Asp-329, His-330, and His-341 each contribute to the Mn(2+) site.

It belongs to the phosphopentomutase family. Mn(2+) serves as cofactor.

The protein resides in the cytoplasm. The catalysed reaction is 2-deoxy-alpha-D-ribose 1-phosphate = 2-deoxy-D-ribose 5-phosphate. The enzyme catalyses alpha-D-ribose 1-phosphate = D-ribose 5-phosphate. Its pathway is carbohydrate degradation; 2-deoxy-D-ribose 1-phosphate degradation; D-glyceraldehyde 3-phosphate and acetaldehyde from 2-deoxy-alpha-D-ribose 1-phosphate: step 1/2. Functionally, isomerase that catalyzes the conversion of deoxy-ribose 1-phosphate (dRib-1-P) and ribose 1-phosphate (Rib-1-P) to deoxy-ribose 5-phosphate (dRib-5-P) and ribose 5-phosphate (Rib-5-P), respectively. This Bacillus pumilus (strain SAFR-032) protein is Phosphopentomutase.